The chain runs to 508 residues: Glycerol kinase (508 aa).

Thr-14 provides a ligand contact to ADP. ATP is bound by residues Thr-14, Thr-15, and Ser-16. Residue Thr-14 participates in sn-glycerol 3-phosphate binding. Arg-18 contributes to the ADP binding site. 4 residues coordinate sn-glycerol 3-phosphate: Arg-84, Glu-85, Tyr-136, and Asp-245. Glycerol-binding residues include Arg-84, Glu-85, Tyr-136, Asp-245, and Gln-246. ADP is bound by residues Thr-267 and Gly-314. Thr-267, Gly-314, Gln-318, and Gly-415 together coordinate ATP. ADP-binding residues include Gly-415 and Asn-419.

This sequence belongs to the FGGY kinase family.

It catalyses the reaction glycerol + ATP = sn-glycerol 3-phosphate + ADP + H(+). The protein operates within polyol metabolism; glycerol degradation via glycerol kinase pathway; sn-glycerol 3-phosphate from glycerol: step 1/1. Its activity is regulated as follows. Inhibited by fructose 1,6-bisphosphate (FBP). In terms of biological role, key enzyme in the regulation of glycerol uptake and metabolism. Catalyzes the phosphorylation of glycerol to yield sn-glycerol 3-phosphate. The chain is Glycerol kinase from Bordetella parapertussis (strain 12822 / ATCC BAA-587 / NCTC 13253).